A 70-amino-acid polypeptide reads, in one-letter code: Putative microRNA 17 host gene protein (70 aa).

Residues methionine 1–proline 20 are Cytoplasmic-facing. A helical transmembrane segment spans residues leucine 21 to cysteine 43. Residues glutamine 44–leucine 70 lie on the Extracellular side of the membrane.

As to expression, highly expressed in B-cell lymphoma and lung cancer.

It localises to the membrane. This is Putative microRNA 17 host gene protein (MIR17HG) from Homo sapiens (Human).